The sequence spans 327 residues: D-threonate 4-phosphate dehydrogenase (327 aa).

The substrate site is built by H139 and T140. A divalent metal cation-binding residues include H169, H213, and H268. Substrate is bound by residues K276, N285, and R294.

It belongs to the PdxA family. PdxA2 subfamily. As to quaternary structure, homodimer. Requires a divalent metal cation as cofactor.

It carries out the reaction 4-O-phospho-D-threonate + NAD(+) = dihydroxyacetone phosphate + CO2 + NADH. In terms of biological role, catalyzes the NAD-dependent oxidation and subsequent decarboxylation of D-threonate 4-phosphate to produce dihydroxyacetone phosphate (DHAP). Can also use 4-hydroxy-L-threonine 4-phosphate as substrate. The chain is D-threonate 4-phosphate dehydrogenase from Salmonella typhimurium (strain LT2 / SGSC1412 / ATCC 700720).